We begin with the raw amino-acid sequence, 353 residues long: RNA 3'-terminal phosphate cyclase (353 aa).

Residues Gln-100 and 289-292 (HMSD) contribute to the ATP site. Residue His-315 is the Tele-AMP-histidine intermediate of the active site.

This sequence belongs to the RNA 3'-terminal cyclase family. Type 1 subfamily.

The protein localises to the cytoplasm. It carries out the reaction a 3'-end 3'-phospho-ribonucleotide-RNA + ATP = a 3'-end 2',3'-cyclophospho-ribonucleotide-RNA + AMP + diphosphate. Catalyzes the conversion of 3'-phosphate to a 2',3'-cyclic phosphodiester at the end of RNA. The mechanism of action of the enzyme occurs in 3 steps: (A) adenylation of the enzyme by ATP; (B) transfer of adenylate to an RNA-N3'P to produce RNA-N3'PP5'A; (C) and attack of the adjacent 2'-hydroxyl on the 3'-phosphorus in the diester linkage to produce the cyclic end product. The biological role of this enzyme is unknown but it is likely to function in some aspects of cellular RNA processing. The polypeptide is RNA 3'-terminal phosphate cyclase (Ignicoccus hospitalis (strain KIN4/I / DSM 18386 / JCM 14125)).